The sequence spans 91 residues: MANLKSSKKDIRRTARRKERNGEDRTELRTYARLLIKAIKSGDKTEALTVFSKLSSKLDRAAKTKLIHKKNADRKKSRMALRINSIEAKAA.

Residues 1 to 26 form a disordered region; it reads MANLKSSKKDIRRTARRKERNGEDRT.

It belongs to the bacterial ribosomal protein bS20 family.

In terms of biological role, binds directly to 16S ribosomal RNA. The sequence is that of Small ribosomal subunit protein bS20 from Leptospira biflexa serovar Patoc (strain Patoc 1 / Ames).